We begin with the raw amino-acid sequence, 309 residues long: Heme A synthase (309 aa).

Over 1–6 (MTKKLK) the chain is Cytoplasmic. The chain crosses the membrane as a helical span at residues 7–27 (ILSVISTICMIPLLLGGALVT). Over 28–62 (KTGSADGCGNSWPLCEGQFLPTKISFEMFIELSHR) the chain is Extracellular. C35 and C42 are oxidised to a cystine. The active site involves E58. H61 lines the heme o pocket. Residues 63–83 (GVTGVVGILIVYLTYLVWKEL) form a helical membrane-spanning segment. Residues 84–88 (RHNKE) lie on the Cytoplasmic side of the membrane. Residues 89 to 109 (VVFLAFSALSLMILQALIGAA) traverse the membrane as a helical segment. The Extracellular portion of the chain corresponds to 110–123 (AVVWGQSDFALATH). H123 contacts heme o. A helical membrane pass occupies residues 124–144 (FGISLVCFAAVFLLMLQLFEI). The Cytoplasmic segment spans residues 145–159 (DKKLHTEDIHINKTH). The helical transmembrane segment at 160–180 (RIEIYAISFYTMCVVYSGALV) threads the bilayer. Over 181–211 (RHTDSNLACRDWPLCVNNSSFGISDYNFYQW) the chain is Extracellular. A disulfide bond links C189 and C195. A helical membrane pass occupies residues 212-232 (VQMGHRLAAGILFIWTVILTI). H216 contributes to the heme b binding site. The Cytoplasmic portion of the chain corresponds to 233-247 (RMVKHYKNSKVFYWS). A helical membrane pass occupies residues 248 to 268 (WLITLGLITLQVLFGALIIFT). The Extracellular segment spans residues 269–271 (SLN). The chain crosses the membrane as a helical span at residues 272–292 (LAIALFHALFITCYFGMLSFF). Residue H278 participates in heme b binding. Over 293–309 (MHLSFRAKRREKYSNQS) the chain is Cytoplasmic.

The protein belongs to the COX15/CtaA family. Type 1 subfamily. As to quaternary structure, interacts with CtaB. Heme b is required as a cofactor.

The protein resides in the cell membrane. The enzyme catalyses Fe(II)-heme o + 2 A + H2O = Fe(II)-heme a + 2 AH2. Its pathway is porphyrin-containing compound metabolism; heme A biosynthesis; heme A from heme O: step 1/1. Functionally, catalyzes the conversion of heme O to heme A by two successive hydroxylations of the methyl group at C8. The first hydroxylation forms heme I, the second hydroxylation results in an unstable dihydroxymethyl group, which spontaneously dehydrates, resulting in the formyl group of heme A. The sequence is that of Heme A synthase from Oceanobacillus iheyensis (strain DSM 14371 / CIP 107618 / JCM 11309 / KCTC 3954 / HTE831).